The chain runs to 443 residues: Xaa-Pro dipeptidase (443 aa).

Positions 244, 255, 336, 381, and 420 each coordinate Mn(2+).

Belongs to the peptidase M24B family. Bacterial-type prolidase subfamily. Requires Mn(2+) as cofactor.

It catalyses the reaction Xaa-L-Pro dipeptide + H2O = an L-alpha-amino acid + L-proline. Functionally, splits dipeptides with a prolyl residue in the C-terminal position. The protein is Xaa-Pro dipeptidase of Stenotrophomonas maltophilia (strain R551-3).